A 127-amino-acid polypeptide reads, in one-letter code: Large ribosomal subunit protein uL22 (127 aa).

It belongs to the universal ribosomal protein uL22 family. As to quaternary structure, part of the 50S ribosomal subunit.

Its function is as follows. This protein binds specifically to 23S rRNA; its binding is stimulated by other ribosomal proteins, e.g. L4, L17, and L20. It is important during the early stages of 50S assembly. It makes multiple contacts with different domains of the 23S rRNA in the assembled 50S subunit and ribosome. Functionally, the globular domain of the protein is located near the polypeptide exit tunnel on the outside of the subunit, while an extended beta-hairpin is found that lines the wall of the exit tunnel in the center of the 70S ribosome. This Methylobacterium nodulans (strain LMG 21967 / CNCM I-2342 / ORS 2060) protein is Large ribosomal subunit protein uL22.